The sequence spans 350 residues: MTVSPVALRRKTECKPHPTARYWKKCDVEALFGLPFLELVYQAAEVHRQNFNPREIQLSTLLSIKTGGCPEDCAYCPQSAHHNTNLGKEQMMDVDEIVEKAKIAKSRGASRFCMGAAWRGPKPKDVETVSAIIKAVKGLGMETCGTFGMLEEGMAEDLKEAGLDYYNHNLDTDPDRYNDIIHTRRHEDRMDTLGKVRNAGLKVCCGGIVGMNETRAERAGLIASLANLDPQPESVPINRLVKVEGTPLADAEDLDWTEFVRTVSVARITMPQSYVRLSAGRSNMPEAMQAMCFMAGANSIFYGDKLLTTGNPDEDGDRILMEKLNLYPLQFEPEGEVAEVEKASGIKADY.

A Radical SAM core domain is found at 54–278; it reads REIQLSTLLS…TMPQSYVRLS (225 aa). [4Fe-4S] cluster-binding residues include C69, C73, and C76. [2Fe-2S] cluster is bound by residues C113, C144, C204, and R276.

It belongs to the radical SAM superfamily. Biotin synthase family. As to quaternary structure, homodimer. [4Fe-4S] cluster serves as cofactor. [2Fe-2S] cluster is required as a cofactor.

It catalyses the reaction (4R,5S)-dethiobiotin + (sulfur carrier)-SH + 2 reduced [2Fe-2S]-[ferredoxin] + 2 S-adenosyl-L-methionine = (sulfur carrier)-H + biotin + 2 5'-deoxyadenosine + 2 L-methionine + 2 oxidized [2Fe-2S]-[ferredoxin]. It functions in the pathway cofactor biosynthesis; biotin biosynthesis; biotin from 7,8-diaminononanoate: step 2/2. Its function is as follows. Catalyzes the conversion of dethiobiotin (DTB) to biotin by the insertion of a sulfur atom into dethiobiotin via a radical-based mechanism. In Neisseria gonorrhoeae (strain ATCC 700825 / FA 1090), this protein is Biotin synthase.